Consider the following 316-residue polypeptide: Transaldolase (316 aa).

Lysine 125 acts as the Schiff-base intermediate with substrate in catalysis.

It belongs to the transaldolase family. Type 1 subfamily. As to quaternary structure, homodimer.

The protein resides in the cytoplasm. The enzyme catalyses D-sedoheptulose 7-phosphate + D-glyceraldehyde 3-phosphate = D-erythrose 4-phosphate + beta-D-fructose 6-phosphate. It functions in the pathway carbohydrate degradation; pentose phosphate pathway; D-glyceraldehyde 3-phosphate and beta-D-fructose 6-phosphate from D-ribose 5-phosphate and D-xylulose 5-phosphate (non-oxidative stage): step 2/3. Functionally, transaldolase is important for the balance of metabolites in the pentose-phosphate pathway. This Acidovorax ebreus (strain TPSY) (Diaphorobacter sp. (strain TPSY)) protein is Transaldolase.